The following is a 211-amino-acid chain: Fucoxanthin-chlorophyll a-c binding protein F, chloroplastic (211 aa).

A chloroplast-targeting transit peptide spans 1-33 (AIACAAAPGLRGPSAFNGAALSTPAKSSSAMKM). Transmembrane regions (helical) follow at residues 75-95 (IAMLAIAGHLTQQNTRLPGML), 116-136 (IPPGGLAQIFGFIGFLELAVM), and 177-197 (GRAAQMGILGMMVHEELSNQP).

It belongs to the fucoxanthin chlorophyll protein family. In terms of assembly, the LHC complex of chromophytic algae is composed of fucoxanthin, chlorophyll A and C bound non-covalently by fucoxanthin chlorophyll proteins (FCPs). The ratio of pigments in this LHC is; fucoxanthin: chlorophyll C: chlorophyll A; (0.6-1): (0.1-0.3): (1).

Its subcellular location is the plastid. The protein localises to the chloroplast thylakoid membrane. The light-harvesting complex (LHC) functions as a light receptor, it captures and delivers excitation energy to photosystems with which it is closely associated. Energy is transferred from the carotenoid and chlorophyll C (or B) to chlorophyll A and the photosynthetic reaction centers where it is used to synthesize ATP and reducing power. The protein is Fucoxanthin-chlorophyll a-c binding protein F, chloroplastic (FCPF) of Macrocystis pyrifera (Giant kelp).